The primary structure comprises 253 residues: uncharacterized protein (253 aa).

This is an uncharacterized protein from Ostreid herpesvirus 1 (isolate France) (OsHV-1).